An 88-amino-acid chain; its full sequence is Small ribosomal subunit protein bS18A (88 aa).

This sequence belongs to the bacterial ribosomal protein bS18 family. In terms of assembly, part of the 30S ribosomal subunit. Forms a tight heterodimer with protein bS6.

In terms of biological role, binds as a heterodimer with protein bS6 to the central domain of the 16S rRNA, where it helps stabilize the platform of the 30S subunit. In Roseiflexus sp. (strain RS-1), this protein is Small ribosomal subunit protein bS18A.